The following is a 223-amino-acid chain: Proteasome subunit beta type-1 (223 aa).

This sequence belongs to the peptidase T1B family. In terms of assembly, component of the 20S core complex of the 26S proteasome. The 26S proteasome is composed of a core protease (CP), known as the 20S proteasome, capped at one or both ends by the 19S regulatory particle (RP/PA700). The 20S proteasome core is composed of 28 subunits that are arranged in four stacked rings, resulting in a barrel-shaped structure. The two end rings are each formed by seven alpha subunits, and the two central rings are each formed by seven beta subunits. The catalytic chamber with the active sites is on the inside of the barrel. As to expression, present in all tissues examined. Slightly lower levels in roots.

It is found in the cytoplasm. Its subcellular location is the nucleus. Non-catalytic component of the proteasome, a multicatalytic proteinase complex which is characterized by its ability to cleave peptides with Arg, Phe, Tyr, Leu, and Glu adjacent to the leaving group at neutral or slightly basic pH. The proteasome has an ATP-dependent proteolytic activity. In Arabidopsis thaliana (Mouse-ear cress), this protein is Proteasome subunit beta type-1 (PBF1).